Reading from the N-terminus, the 218-residue chain is Thiamine-phosphate synthase (218 aa).

4-amino-2-methyl-5-(diphosphooxymethyl)pyrimidine contacts are provided by residues 46–50 and Asp-83; that span reads QFRDK. Mg(2+)-binding residues include Asp-84 and Asp-103. Ser-122 contacts 4-amino-2-methyl-5-(diphosphooxymethyl)pyrimidine. 149 to 151 is a binding site for 2-[(2R,5Z)-2-carboxy-4-methylthiazol-5(2H)-ylidene]ethyl phosphate; it reads TNS. Lys-152 provides a ligand contact to 4-amino-2-methyl-5-(diphosphooxymethyl)pyrimidine. Residues Gly-181 and 201–202 contribute to the 2-[(2R,5Z)-2-carboxy-4-methylthiazol-5(2H)-ylidene]ethyl phosphate site; that span reads IT.

This sequence belongs to the thiamine-phosphate synthase family. It depends on Mg(2+) as a cofactor.

The enzyme catalyses 2-[(2R,5Z)-2-carboxy-4-methylthiazol-5(2H)-ylidene]ethyl phosphate + 4-amino-2-methyl-5-(diphosphooxymethyl)pyrimidine + 2 H(+) = thiamine phosphate + CO2 + diphosphate. The catalysed reaction is 2-(2-carboxy-4-methylthiazol-5-yl)ethyl phosphate + 4-amino-2-methyl-5-(diphosphooxymethyl)pyrimidine + 2 H(+) = thiamine phosphate + CO2 + diphosphate. It catalyses the reaction 4-methyl-5-(2-phosphooxyethyl)-thiazole + 4-amino-2-methyl-5-(diphosphooxymethyl)pyrimidine + H(+) = thiamine phosphate + diphosphate. It functions in the pathway cofactor biosynthesis; thiamine diphosphate biosynthesis; thiamine phosphate from 4-amino-2-methyl-5-diphosphomethylpyrimidine and 4-methyl-5-(2-phosphoethyl)-thiazole: step 1/1. In terms of biological role, condenses 4-methyl-5-(beta-hydroxyethyl)thiazole monophosphate (THZ-P) and 2-methyl-4-amino-5-hydroxymethyl pyrimidine pyrophosphate (HMP-PP) to form thiamine monophosphate (TMP). This is Thiamine-phosphate synthase from Actinobacillus pleuropneumoniae serotype 7 (strain AP76).